Here is a 343-residue protein sequence, read N- to C-terminus: UDP-3-O-acylglucosamine N-acyltransferase (343 aa).

Histidine 239 (proton acceptor) is an active-site residue.

This sequence belongs to the transferase hexapeptide repeat family. LpxD subfamily. As to quaternary structure, homotrimer.

The enzyme catalyses a UDP-3-O-[(3R)-3-hydroxyacyl]-alpha-D-glucosamine + a (3R)-hydroxyacyl-[ACP] = a UDP-2-N,3-O-bis[(3R)-3-hydroxyacyl]-alpha-D-glucosamine + holo-[ACP] + H(+). Its pathway is bacterial outer membrane biogenesis; LPS lipid A biosynthesis. In terms of biological role, catalyzes the N-acylation of UDP-3-O-acylglucosamine using 3-hydroxyacyl-ACP as the acyl donor. Is involved in the biosynthesis of lipid A, a phosphorylated glycolipid that anchors the lipopolysaccharide to the outer membrane of the cell. This chain is UDP-3-O-acylglucosamine N-acyltransferase, found in Vibrio parahaemolyticus serotype O3:K6 (strain RIMD 2210633).